The following is a 178-amino-acid chain: ATP synthase subunit delta (178 aa).

It belongs to the ATPase delta chain family. In terms of assembly, F-type ATPases have 2 components, F(1) - the catalytic core - and F(0) - the membrane proton channel. F(1) has five subunits: alpha(3), beta(3), gamma(1), delta(1), epsilon(1). F(0) has three main subunits: a(1), b(2) and c(10-14). The alpha and beta chains form an alternating ring which encloses part of the gamma chain. F(1) is attached to F(0) by a central stalk formed by the gamma and epsilon chains, while a peripheral stalk is formed by the delta and b chains.

It is found in the cell membrane. In terms of biological role, f(1)F(0) ATP synthase produces ATP from ADP in the presence of a proton or sodium gradient. F-type ATPases consist of two structural domains, F(1) containing the extramembraneous catalytic core and F(0) containing the membrane proton channel, linked together by a central stalk and a peripheral stalk. During catalysis, ATP synthesis in the catalytic domain of F(1) is coupled via a rotary mechanism of the central stalk subunits to proton translocation. This protein is part of the stalk that links CF(0) to CF(1). It either transmits conformational changes from CF(0) to CF(1) or is implicated in proton conduction. This chain is ATP synthase subunit delta, found in Streptococcus mutans serotype c (strain ATCC 700610 / UA159).